Here is a 126-residue protein sequence, read N- to C-terminus: Aspartate 1-decarboxylase (126 aa).

Residue Ser-25 is the Schiff-base intermediate with substrate; via pyruvic acid of the active site. Position 25 is a pyruvic acid (Ser) (Ser-25). Substrate is bound at residue Thr-57. The Proton donor role is filled by Tyr-58. 73–75 (GAA) contacts substrate.

This sequence belongs to the PanD family. Heterooctamer of four alpha and four beta subunits. The cofactor is pyruvate. Post-translationally, is synthesized initially as an inactive proenzyme, which is activated by self-cleavage at a specific serine bond to produce a beta-subunit with a hydroxyl group at its C-terminus and an alpha-subunit with a pyruvoyl group at its N-terminus.

The protein resides in the cytoplasm. The catalysed reaction is L-aspartate + H(+) = beta-alanine + CO2. Its pathway is cofactor biosynthesis; (R)-pantothenate biosynthesis; beta-alanine from L-aspartate: step 1/1. In terms of biological role, catalyzes the pyruvoyl-dependent decarboxylation of aspartate to produce beta-alanine. The protein is Aspartate 1-decarboxylase of Saccharophagus degradans (strain 2-40 / ATCC 43961 / DSM 17024).